An 875-amino-acid polypeptide reads, in one-letter code: Probable dipeptidyl-aminopeptidase B (875 aa).

Positions 1–90 (MSEPKPIQDT…ASSETTPPRK (90 aa)) are disordered. The Cytoplasmic portion of the chain corresponds to 1–98 (MSEPKPIQDT…RKGVDRKLKK (98 aa)). The span at 19–28 (SSISSASTTS) shows a compositional bias: low complexity. Residues 33-46 (RLAEESEKNHDASS) are compositionally biased toward basic and acidic residues. Residues 99–119 (VLLIVGGFFVAAWIVSLVVFL) form a helical; Signal-anchor for type II membrane protein membrane-spanning segment. The Vacuolar portion of the chain corresponds to 120-875 (TNKSYKHGSQ…VNDAKPKIES (756 aa)). Asparagine 354 and asparagine 567 each carry an N-linked (GlcNAc...) asparagine glycan. Residues 689-715 (VDFQSSDGGRRTTRSPRRATGRPSATS) are disordered. Positions 699 to 708 (RTTRSPRRAT) are enriched in basic residues. Serine 726 (charge relay system) is an active-site residue. Asparagine 785 carries an N-linked (GlcNAc...) asparagine glycan. Active-site charge relay system residues include aspartate 803 and histidine 836.

Belongs to the peptidase S9B family.

It is found in the vacuole membrane. It catalyses the reaction Release of an N-terminal dipeptide, Xaa-Yaa-|-Zaa-, from a polypeptide, preferentially when Yaa is Pro, provided Zaa is neither Pro nor hydroxyproline.. In terms of biological role, type IV dipeptidyl-peptidase which removes N-terminal dipeptides sequentially from polypeptides having unsubstituted N-termini provided that the penultimate residue is proline. This chain is Probable dipeptidyl-aminopeptidase B (DAPB), found in Verticillium alfalfae (strain VaMs.102 / ATCC MYA-4576 / FGSC 10136) (Verticillium wilt of alfalfa).